Reading from the N-terminus, the 478-residue chain is Proline--tRNA ligase (478 aa).

The protein belongs to the class-II aminoacyl-tRNA synthetase family. ProS type 3 subfamily. As to quaternary structure, homodimer.

The protein localises to the cytoplasm. The catalysed reaction is tRNA(Pro) + L-proline + ATP = L-prolyl-tRNA(Pro) + AMP + diphosphate. Functionally, catalyzes the attachment of proline to tRNA(Pro) in a two-step reaction: proline is first activated by ATP to form Pro-AMP and then transferred to the acceptor end of tRNA(Pro). This is Proline--tRNA ligase from Clostridium botulinum (strain Loch Maree / Type A3).